Reading from the N-terminus, the 268-residue chain is Tryptophan synthase alpha chain (268 aa).

Active-site proton acceptor residues include glutamate 49 and aspartate 60.

This sequence belongs to the TrpA family. As to quaternary structure, tetramer of two alpha and two beta chains.

It carries out the reaction (1S,2R)-1-C-(indol-3-yl)glycerol 3-phosphate + L-serine = D-glyceraldehyde 3-phosphate + L-tryptophan + H2O. It functions in the pathway amino-acid biosynthesis; L-tryptophan biosynthesis; L-tryptophan from chorismate: step 5/5. The alpha subunit is responsible for the aldol cleavage of indoleglycerol phosphate to indole and glyceraldehyde 3-phosphate. The sequence is that of Tryptophan synthase alpha chain from Escherichia coli (strain SMS-3-5 / SECEC).